The sequence spans 376 residues: 23S rRNA (uracil(747)-C(5))-methyltransferase RlmC (376 aa).

[4Fe-4S] cluster contacts are provided by Cys-3, Cys-11, Cys-14, and Cys-87. S-adenosyl-L-methionine is bound by residues Gln-212, Phe-241, Glu-262, and Asn-307. The active-site Nucleophile is the Cys-334.

It belongs to the class I-like SAM-binding methyltransferase superfamily. RNA M5U methyltransferase family. RlmC subfamily.

It carries out the reaction uridine(747) in 23S rRNA + S-adenosyl-L-methionine = 5-methyluridine(747) in 23S rRNA + S-adenosyl-L-homocysteine + H(+). Its function is as follows. Catalyzes the formation of 5-methyl-uridine at position 747 (m5U747) in 23S rRNA. This chain is 23S rRNA (uracil(747)-C(5))-methyltransferase RlmC, found in Pectobacterium carotovorum subsp. carotovorum (strain PC1).